A 1004-amino-acid polypeptide reads, in one-letter code: Retrovirus-related Pol polyprotein from type-1 retrotransposable element R1 (1004 aa).

The Reverse transcriptase domain maps to 450–717 (QCLLESYFPQ…SEVKHLGIFV (268 aa)). A nucleic acid-binding endonuclease region spans residues 853 to 1004 (LSGSQFKELL…RLMRGMRIRE (152 aa)).

It catalyses the reaction DNA(n) + a 2'-deoxyribonucleoside 5'-triphosphate = DNA(n+1) + diphosphate. This is Retrovirus-related Pol polyprotein from type-1 retrotransposable element R1 from Bradysia coprophila (Dark-winged fungus gnat).